The sequence spans 883 residues: Translation initiation factor IF-2 (883 aa).

Residues 1–259 (MVDTKTPGDK…GASKQRGRLT (259 aa)) form a disordered region. Composition is skewed to low complexity over residues 10–22 (KTLT…LTLK) and 77–89 (PRQQ…PQQS). Residues 113-184 (ARVREIEERK…GDAEPAKKPA (72 aa)) are compositionally biased toward basic and acidic residues. Residues 185 to 218 (ETSTTTTTAAPARPATTTTRTPTPAGRPPAVAAE) show a composition bias toward low complexity. The span at 235–244 (PARPAPPPKQ) shows a compositional bias: pro residues. Residues 379-548 (PRSPVVTVMG…MIALQAEILE (170 aa)) enclose the tr-type G domain. The interval 388-395 (GHVDHGKT) is G1. Residue 388 to 395 (GHVDHGKT) coordinates GTP. Positions 413–417 (GITQH) are G2. Residues 436 to 439 (DTPG) form a G3 region. GTP is bound by residues 436-440 (DTPGH) and 490-493 (NKID). A G4 region spans residues 490–493 (NKID). The segment at 526–528 (SAK) is G5.

The protein belongs to the TRAFAC class translation factor GTPase superfamily. Classic translation factor GTPase family. IF-2 subfamily.

The protein localises to the cytoplasm. Its function is as follows. One of the essential components for the initiation of protein synthesis. Protects formylmethionyl-tRNA from spontaneous hydrolysis and promotes its binding to the 30S ribosomal subunits. Also involved in the hydrolysis of GTP during the formation of the 70S ribosomal complex. This chain is Translation initiation factor IF-2, found in Rhodopseudomonas palustris (strain ATCC BAA-98 / CGA009).